Reading from the N-terminus, the 237-residue chain is Undecaprenyl-diphosphatase (237 aa).

Helical transmembrane passes span 38–58, 65–85, 92–112, 126–146, 166–186, 191–211, and 217–237; these read QTAVLHLGTLVSVVLFAFDGI, WRIILNLIVSTIPAGVFGVLF, LFSSPRFLPLFFSVTALILMF, MSFLDALLVGIAQLFALFPGI, ALQYSFLMSIPVVLGAGILGL, VTILAPIFAFLSGLFALYVLS, and GKIWQFSYYCLFVAILSYLVG.

Belongs to the UppP family.

Its subcellular location is the cell inner membrane. It carries out the reaction di-trans,octa-cis-undecaprenyl diphosphate + H2O = di-trans,octa-cis-undecaprenyl phosphate + phosphate + H(+). Functionally, catalyzes the dephosphorylation of undecaprenyl diphosphate (UPP). Confers resistance to bacitracin. The protein is Undecaprenyl-diphosphatase of Thermotoga sp. (strain RQ2).